We begin with the raw amino-acid sequence, 315 residues long: uncharacterized protein (315 aa).

This is an uncharacterized protein from Homo sapiens (Human).